Here is a 145-residue protein sequence, read N- to C-terminus: Basic phospholipase A2 cL037 (145 aa).

The first 21 residues, 1–21, serve as a signal peptide directing secretion; sequence MYPAHLLVLLAVCVSLLGASA. The propeptide occupies 22–27; it reads ILPLPL. Cystine bridges form between Cys-38–Cys-98, Cys-54–Cys-144, Cys-56–Cys-72, Cys-71–Cys-125, Cys-78–Cys-118, Cys-87–Cys-111, and Cys-105–Cys-116. Tyr-55, Gly-57, and Gly-59 together coordinate Ca(2+). Residue His-75 is part of the active site. Position 76 (Asp-76) interacts with Ca(2+). Residue Asp-119 is part of the active site.

This sequence belongs to the phospholipase A2 family. Group I subfamily. D49 sub-subfamily. The cofactor is Ca(2+). As to expression, expressed by the venom gland.

It localises to the secreted. The enzyme catalyses a 1,2-diacyl-sn-glycero-3-phosphocholine + H2O = a 1-acyl-sn-glycero-3-phosphocholine + a fatty acid + H(+). PLA2 catalyzes the calcium-dependent hydrolysis of the 2-acyl groups in 3-sn-phosphoglycerides. The sequence is that of Basic phospholipase A2 cL037 from Laticauda semifasciata (Black-banded sea krait).